A 268-amino-acid polypeptide reads, in one-letter code: Embryonic abundant protein USP87 (268 aa).

Residues 1 to 22 (MEFAHLTVLSLFCLAFVGITAT) form the signal peptide. Tandem repeats lie at residues 50–55 (GKTNSL), 83–88 (GNTNSV), 101–106 (GVTDSI), 166–183 (YVVE…MCHR), and 202–222 (YVVS…VCHH). The segment at 50–106 (GKTNSLPIKSEELKQYSTLFFEHDLHPRKNFILGNTNSVGSIIRPFTKSRQGVTDSI) is 3 X 6 AA approximate repeats. The BURP domain occupies 68-259 (LFFEHDLHPR…GNKAAAWVPN (192 aa)). The segment at 166 to 222 (YVVEDVKKVGDNAVMCHRLNFEKVVFNCHQVRDTTAYVVSLVASDGTKTKALTVCHH) is 2 X approximate repeats. An N-linked (GlcNAc...) asparagine glycan is attached at Asn-259.

In terms of tissue distribution, seed.

The polypeptide is Embryonic abundant protein USP87 (Vicia faba (Broad bean)).